Here is a 321-residue protein sequence, read N- to C-terminus: Auxin-responsive protein IAA8 (321 aa).

The EAR-like (transcriptional repression) motif lies at 54-58 (LRLGL). The PB1 domain occupies 199 to 301 (VLFVKVSMDG…TCQKLKIMKG (103 aa)).

This sequence belongs to the Aux/IAA family. Homodimers and heterodimers. Interacts with TPL. In terms of tissue distribution, highly expressed in the whole plant.

It localises to the nucleus. Functionally, aux/IAA proteins are short-lived transcriptional factors that function as repressors of early auxin response genes at low auxin concentrations. Repression is thought to result from the interaction with auxin response factors (ARFs), proteins that bind to the auxin-responsive promoter element (AuxRE). Formation of heterodimers with ARF proteins may alter their ability to modulate early auxin response genes expression. This Arabidopsis thaliana (Mouse-ear cress) protein is Auxin-responsive protein IAA8 (IAA8).